The primary structure comprises 793 residues: Probable phosphoketolase (793 aa).

This sequence belongs to the XFP family. Thiamine diphosphate is required as a cofactor.

The protein is Probable phosphoketolase of Rhodopirellula baltica (strain DSM 10527 / NCIMB 13988 / SH1).